Here is a 119-residue protein sequence, read N- to C-terminus: Host cell factor C1 regulator 1 (119 aa).

The tract at residues 1–34 is disordered; that stretch reads MILQQPLERGPQGRAQRDPRAASGASGGLDAREP. The tract at residues 57–60 is interaction with HCFC1; it reads DHPY. The Nuclear export signal motif lies at 91–100; it reads IPEALRLLRL.

Interacts with HCFC1.

Its subcellular location is the cytoplasm. The protein resides in the nucleus. Regulates HCFC1 activity by modulating its subcellular localization. Overexpression of HCFC1R1 leads to accumulation of HCFC1 in the cytoplasm. HCFC1R1-mediated export may provide the pool of cytoplasmic HCFC1 required for import of virion-derived VP16 into the nucleus. This is Host cell factor C1 regulator 1 (HCFC1R1) from Bos taurus (Bovine).